A 96-amino-acid polypeptide reads, in one-letter code: Small ribosomal subunit protein bS6 (96 aa).

This sequence belongs to the bacterial ribosomal protein bS6 family.

In terms of biological role, binds together with bS18 to 16S ribosomal RNA. The sequence is that of Small ribosomal subunit protein bS6 from Streptococcus suis (strain 98HAH33).